The following is a 441-amino-acid chain: Ribosomal protein uS12 methylthiotransferase RimO (441 aa).

Residues 8 to 118 enclose the MTTase N-terminal domain; the sequence is PKIGFVSLGC…VLQHVHHYVP (111 aa). [4Fe-4S] cluster contacts are provided by Cys-17, Cys-53, Cys-82, Cys-150, Cys-154, and Cys-157. A Radical SAM core domain is found at 136–373; it reads LTPRHYAYLK…MQLQQQISAE (238 aa). A TRAM domain is found at 376–441; that stretch reads QEKVGREILV…DEYDLWGSRV (66 aa).

It belongs to the methylthiotransferase family. RimO subfamily. [4Fe-4S] cluster is required as a cofactor.

It localises to the cytoplasm. The enzyme catalyses L-aspartate(89)-[ribosomal protein uS12]-hydrogen + (sulfur carrier)-SH + AH2 + 2 S-adenosyl-L-methionine = 3-methylsulfanyl-L-aspartate(89)-[ribosomal protein uS12]-hydrogen + (sulfur carrier)-H + 5'-deoxyadenosine + L-methionine + A + S-adenosyl-L-homocysteine + 2 H(+). Catalyzes the methylthiolation of an aspartic acid residue of ribosomal protein uS12. The polypeptide is Ribosomal protein uS12 methylthiotransferase RimO (Salmonella typhi).